The primary structure comprises 393 residues: CCA-adding enzyme (393 aa).

ATP is bound by residues glycine 27 and arginine 30. 2 residues coordinate CTP: glycine 27 and arginine 30. Positions 40 and 42 each coordinate Mg(2+). ATP-binding residues include arginine 111, aspartate 154, arginine 157, arginine 160, and arginine 163. Residues arginine 111, aspartate 154, arginine 157, arginine 160, and arginine 163 each contribute to the CTP site.

This sequence belongs to the tRNA nucleotidyltransferase/poly(A) polymerase family. Bacterial CCA-adding enzyme type 3 subfamily. Homodimer. The cofactor is Mg(2+).

It carries out the reaction a tRNA precursor + 2 CTP + ATP = a tRNA with a 3' CCA end + 3 diphosphate. It catalyses the reaction a tRNA with a 3' CCA end + 2 CTP + ATP = a tRNA with a 3' CCACCA end + 3 diphosphate. Catalyzes the addition and repair of the essential 3'-terminal CCA sequence in tRNAs without using a nucleic acid template. Adds these three nucleotides in the order of C, C, and A to the tRNA nucleotide-73, using CTP and ATP as substrates and producing inorganic pyrophosphate. tRNA 3'-terminal CCA addition is required both for tRNA processing and repair. Also involved in tRNA surveillance by mediating tandem CCA addition to generate a CCACCA at the 3' terminus of unstable tRNAs. While stable tRNAs receive only 3'-terminal CCA, unstable tRNAs are marked with CCACCA and rapidly degraded. In Listeria monocytogenes serovar 1/2a (strain ATCC BAA-679 / EGD-e), this protein is CCA-adding enzyme.